A 337-amino-acid polypeptide reads, in one-letter code: UbiA prenyltransferase domain-containing protein 1 (337 aa).

An N-acetylalanine modification is found at A2. Transmembrane regions (helical) follow at residues 82–102 (LLVGCAVAVLAVHGAGNLVNT), 133–153 (FGVFLYTLGCVCAACLYCLSP), 159–179 (LALIYFGGLSGSFLYTGGIGF), 187–207 (LVILITFGPLAVMFAYAVQVG), 208–228 (SLAVFPLVYAIPLALSTEAVL), 244–266 (IVTLAILIGPTLSYVLYNTLLFL), 276–296 (THCSISLALPLLTVPMAFSLE), and 314–334 (LNLLLGLFYVFGIILAPAGSL).

The protein belongs to the UbiA prenyltransferase family. As to quaternary structure, interacts with HMGCR and SOAT1.

The protein localises to the endoplasmic reticulum membrane. It is found in the golgi apparatus membrane. Its subcellular location is the mitochondrion membrane. The catalysed reaction is menadiol + (2E,6E,10E)-geranylgeranyl diphosphate = menaquinol-4 + diphosphate. It carries out the reaction all-trans-decaprenyl diphosphate + 4-hydroxybenzoate = 4-hydroxy-3-(all-trans-decaprenyl)benzoate + diphosphate. It participates in quinol/quinone metabolism; menaquinone biosynthesis. The protein operates within cofactor biosynthesis; ubiquinone biosynthesis. Its function is as follows. Prenyltransferase that mediates the formation of menaquinone-4 (MK-4) and coenzyme Q10. MK-4 is a vitamin K2 isoform required for endothelial cell development. Mediates the conversion of phylloquinone (PK) into MK-4, probably by cleaving the side chain of phylloquinone (PK) to release 2-methyl-1,4-naphthoquinone (menadione; K3) and then prenylating it with geranylgeranyl pyrophosphate (GGPP) to form MK-4. Also plays a role in cardiovascular development independently of MK-4 biosynthesis, by acting as a coenzyme Q10 biosynthetic enzyme: coenzyme Q10, also named ubiquinone, plays an important antioxidant role in the cardiovascular system. Mediates biosynthesis of coenzyme Q10 in the Golgi membrane, leading to protect cardiovascular tissues from NOS3/eNOS-dependent oxidative stress. The chain is UbiA prenyltransferase domain-containing protein 1 (UBIAD1) from Ailuropoda melanoleuca (Giant panda).